Consider the following 89-residue polypeptide: Cell division topological specificity factor (89 aa).

Belongs to the MinE family.

Its function is as follows. Prevents the cell division inhibition by proteins MinC and MinD at internal division sites while permitting inhibition at polar sites. This ensures cell division at the proper site by restricting the formation of a division septum at the midpoint of the long axis of the cell. This chain is Cell division topological specificity factor, found in Desulforudis audaxviator (strain MP104C).